We begin with the raw amino-acid sequence, 156 residues long: MSFLTLKGNKMIIENQKDAEFSSAFKPSQLAQASRFKRWLASMINGLVLWVMAGLGFALGDFAGVVGMIVYAGFQLYFMKTYGQTMAKRWLGLRVFNYHTNQPVEFGKYIGREIIDILLAWTSFLLIISGIVALVRDDRRSLTDLVAGTIVLKDEK.

Transmembrane regions (helical) follow at residues 46–66 (GLVLWVMAGLGFALGDFAGVV) and 114–134 (IIDILLAWTSFLLIISGIVAL).

The protein localises to the cell membrane. This is an uncharacterized protein from Haemophilus influenzae (strain ATCC 51907 / DSM 11121 / KW20 / Rd).